The chain runs to 996 residues: Alanine--tRNA ligase, chloroplastic/mitochondrial (996 aa).

The Zn(2+) site is built by His677, His681, Cys779, and His783.

This sequence belongs to the class-II aminoacyl-tRNA synthetase family. Monomer. Zn(2+) is required as a cofactor.

The protein localises to the plastid. It is found in the chloroplast. Its subcellular location is the mitochondrion. It carries out the reaction tRNA(Ala) + L-alanine + ATP = L-alanyl-tRNA(Ala) + AMP + diphosphate. In terms of biological role, catalyzes the attachment of alanine to tRNA(Ala) in a two-step reaction: alanine is first activated by ATP to form Ala-AMP and then transferred to the acceptor end of tRNA(Ala). Also edits incorrectly charged tRNA(Ala) via its editing domain. This Oryza sativa subsp. japonica (Rice) protein is Alanine--tRNA ligase, chloroplastic/mitochondrial.